A 107-amino-acid chain; its full sequence is Small ribosomal subunit protein uS15 (107 aa).

Position 27 is an N6-acetyllysine; alternate (Lys27). Lys27 is modified (N6-succinyllysine; alternate). Lys27 is covalently cross-linked (Glycyl lysine isopeptide (Lys-Gly) (interchain with G-Cter in ubiquitin)). Residue Ser30 is modified to Phosphoserine. Lys34 carries the N6-succinyllysine modification. Tyr38 bears the Phosphotyrosine mark. A Glycyl lysine isopeptide (Lys-Gly) (interchain with G-Cter in SUMO2) cross-link involves residue Lys43.

Belongs to the universal ribosomal protein uS15 family. Component of the small ribosomal subunit. Part of the small subunit (SSU) processome, composed of more than 70 proteins and the RNA chaperone small nucleolar RNA (snoRNA) U3. In terms of processing, ubiquitinated at Lys-27 by RNF14 and RNF25 in response to ribosome collisions (ribosome stalling).

It localises to the cytoplasm. Its subcellular location is the nucleus. The protein resides in the nucleolus. Component of the small ribosomal subunit. The ribosome is a large ribonucleoprotein complex responsible for the synthesis of proteins in the cell. Part of the small subunit (SSU) processome, first precursor of the small eukaryotic ribosomal subunit. During the assembly of the SSU processome in the nucleolus, many ribosome biogenesis factors, an RNA chaperone and ribosomal proteins associate with the nascent pre-rRNA and work in concert to generate RNA folding, modifications, rearrangements and cleavage as well as targeted degradation of pre-ribosomal RNA by the RNA exosome. This is Small ribosomal subunit protein uS15 (RPS13) from Sus scrofa (Pig).